The sequence spans 913 residues: DNA mismatch repair protein MutS (913 aa).

Position 720-727 (720-727) interacts with ATP; sequence GPNASGKS.

Belongs to the DNA mismatch repair MutS family.

This protein is involved in the repair of mismatches in DNA. It is possible that it carries out the mismatch recognition step. This protein has a weak ATPase activity. This is DNA mismatch repair protein MutS from Prochlorococcus marinus (strain MIT 9312).